The sequence spans 220 residues: UPF0319 protein YccT (220 aa).

The N-terminal stretch at 1-20 is a signal peptide; the sequence is MKTGALATFLALCLPVTVFA.

The protein belongs to the UPF0319 family.

The sequence is that of UPF0319 protein YccT from Salmonella enteritidis PT4 (strain P125109).